Here is a 376-residue protein sequence, read N- to C-terminus: Succinyl-diaminopimelate desuccinylase (376 aa).

His-67 provides a ligand contact to Zn(2+). Asp-69 is a catalytic residue. A Zn(2+)-binding site is contributed by Asp-100. Catalysis depends on Glu-134, which acts as the Proton acceptor. Zn(2+) is bound by residues Glu-135, Glu-163, and His-349.

Belongs to the peptidase M20A family. DapE subfamily. In terms of assembly, homodimer. Zn(2+) serves as cofactor. It depends on Co(2+) as a cofactor.

It carries out the reaction N-succinyl-(2S,6S)-2,6-diaminopimelate + H2O = (2S,6S)-2,6-diaminopimelate + succinate. The protein operates within amino-acid biosynthesis; L-lysine biosynthesis via DAP pathway; LL-2,6-diaminopimelate from (S)-tetrahydrodipicolinate (succinylase route): step 3/3. Its function is as follows. Catalyzes the hydrolysis of N-succinyl-L,L-diaminopimelic acid (SDAP), forming succinate and LL-2,6-diaminopimelate (DAP), an intermediate involved in the bacterial biosynthesis of lysine and meso-diaminopimelic acid, an essential component of bacterial cell walls. In Pseudoalteromonas translucida (strain TAC 125), this protein is Succinyl-diaminopimelate desuccinylase.